A 619-amino-acid polypeptide reads, in one-letter code: Dihydroxy-acid dehydratase (619 aa).

Aspartate 81 contacts Mg(2+). Cysteine 122 serves as a coordination point for [2Fe-2S] cluster. Residues aspartate 123 and lysine 124 each coordinate Mg(2+). Lysine 124 carries the N6-carboxylysine modification. Cysteine 201 is a [2Fe-2S] cluster binding site. Glutamate 496 provides a ligand contact to Mg(2+). The active-site Proton acceptor is the serine 522.

This sequence belongs to the IlvD/Edd family. Homodimer. It depends on [2Fe-2S] cluster as a cofactor. Mg(2+) is required as a cofactor.

The enzyme catalyses (2R)-2,3-dihydroxy-3-methylbutanoate = 3-methyl-2-oxobutanoate + H2O. It catalyses the reaction (2R,3R)-2,3-dihydroxy-3-methylpentanoate = (S)-3-methyl-2-oxopentanoate + H2O. Its pathway is amino-acid biosynthesis; L-isoleucine biosynthesis; L-isoleucine from 2-oxobutanoate: step 3/4. It functions in the pathway amino-acid biosynthesis; L-valine biosynthesis; L-valine from pyruvate: step 3/4. Functions in the biosynthesis of branched-chain amino acids. Catalyzes the dehydration of (2R,3R)-2,3-dihydroxy-3-methylpentanoate (2,3-dihydroxy-3-methylvalerate) into 2-oxo-3-methylpentanoate (2-oxo-3-methylvalerate) and of (2R)-2,3-dihydroxy-3-methylbutanoate (2,3-dihydroxyisovalerate) into 2-oxo-3-methylbutanoate (2-oxoisovalerate), the penultimate precursor to L-isoleucine and L-valine, respectively. This Paracidovorax citrulli (strain AAC00-1) (Acidovorax citrulli) protein is Dihydroxy-acid dehydratase.